We begin with the raw amino-acid sequence, 424 residues long: Methylenetetrahydrofolate--tRNA-(uracil-5-)-methyltransferase TrmFO 1 (424 aa).

An FAD-binding site is contributed by 8 to 13 (GAGLSG).

This sequence belongs to the MnmG family. TrmFO subfamily. It depends on FAD as a cofactor.

The protein localises to the cytoplasm. It carries out the reaction uridine(54) in tRNA + (6R)-5,10-methylene-5,6,7,8-tetrahydrofolate + NADH + H(+) = 5-methyluridine(54) in tRNA + (6S)-5,6,7,8-tetrahydrofolate + NAD(+). The enzyme catalyses uridine(54) in tRNA + (6R)-5,10-methylene-5,6,7,8-tetrahydrofolate + NADPH + H(+) = 5-methyluridine(54) in tRNA + (6S)-5,6,7,8-tetrahydrofolate + NADP(+). In terms of biological role, catalyzes the folate-dependent formation of 5-methyl-uridine at position 54 (M-5-U54) in all tRNAs. The polypeptide is Methylenetetrahydrofolate--tRNA-(uracil-5-)-methyltransferase TrmFO 1 (Mycoplasma mycoides subsp. mycoides SC (strain CCUG 32753 / NCTC 10114 / PG1)).